A 276-amino-acid chain; its full sequence is Orotidine 5'-phosphate decarboxylase (276 aa).

Residue K95 is the Proton donor of the active site.

It belongs to the OMP decarboxylase family. Type 2 subfamily.

It catalyses the reaction orotidine 5'-phosphate + H(+) = UMP + CO2. The protein operates within pyrimidine metabolism; UMP biosynthesis via de novo pathway; UMP from orotate: step 2/2. This Mycolicibacterium smegmatis (strain ATCC 700084 / mc(2)155) (Mycobacterium smegmatis) protein is Orotidine 5'-phosphate decarboxylase (pyrF).